The sequence spans 54 residues: MENNVLYGVYSTRSRKFCFGIEEPSKTKARKELFNRIGTDAYKWRFEIRKIKRK.

This Bacillus subtilis (strain 168) protein is SPbeta prophage-derived uncharacterized protein YoqE (yoqE).